We begin with the raw amino-acid sequence, 527 residues long: Secologanin synthase 2 (527 aa).

Residues 1–11 lie on the Lumenal side of the membrane; the sequence is MEMDMDIIRKA. The helical transmembrane segment at 12–32 threads the bilayer; the sequence is IAATIFALVMAWAWRVLDWAW. The Cytoplasmic portion of the chain corresponds to 33 to 527; that stretch reads FTPKRIEKRL…IYKKLERQNF (495 aa). Residue Cys-470 participates in heme binding.

This sequence belongs to the cytochrome P450 family. Heme serves as cofactor. As to expression, expressed in leaves (especially in leaf epidermis), and, to a lower extent, in roots, stems, flower buds and flowers.

The protein resides in the endoplasmic reticulum membrane. The catalysed reaction is loganin + reduced [NADPH--hemoprotein reductase] + O2 = secologanin + oxidized [NADPH--hemoprotein reductase] + 2 H2O + H(+). It carries out the reaction secologanin + reduced [NADPH--hemoprotein reductase] + O2 = secoxyloganin + oxidized [NADPH--hemoprotein reductase] + H2O + 2 H(+). It participates in alkaloid biosynthesis. In terms of biological role, component of the seco-iridoid and derivatives monoterpenoid indole alkaloids (MIAs, e.g. secologanin) biosynthesis pathway. Catalyzes the conversion of loganin into secologanin. Catalyzes the conversion of secologanin into secoxyloganin. This is Secologanin synthase 2 from Catharanthus roseus (Madagascar periwinkle).